The sequence spans 251 residues: Core protein VP8 (251 aa).

Residues 1-32 (MSLLLENLIEEDTIFFAGSISEYDDLQMVIAG) constitute a propeptide, removed by core protease OPG083.

This sequence belongs to the orthopoxvirus OPG098 family. In terms of processing, undergoes morphogenesis-associated proteolysis which cleaves the 28 kDa to a 25-kDa product. Proteolytic cleavage of major core proteins P4a (OPG136), P4b (OPG129), and VP8 (OPG098), which occurs at a late stage of core formation, is required for production of infectious mature virions (MV).

The protein localises to the virion. Its subcellular location is the host cytoplasm. Major core structural protein. In Monkeypox virus, this protein is Core protein VP8 (OPG098).